Consider the following 36-residue polypeptide: MTDFNLPSIFVPLVGLVFPAIAMASLSLHVQKNKIV.

A helical membrane pass occupies residues Leu-6–Leu-26.

The protein belongs to the PsaI family.

It localises to the plastid. It is found in the chloroplast thylakoid membrane. Its function is as follows. May help in the organization of the PsaL subunit. The protein is Photosystem I reaction center subunit VIII of Liriodendron tulipifera (Tuliptree).